Consider the following 168-residue polypeptide: RxLR effector protein CRE8 (168 aa).

The first 23 residues, 1–23, serve as a signal peptide directing secretion; it reads MRLPSILVVAASTLFLHYGYTSA. A RxLR-dEER motif is present at residues 54–69; sequence RFLRDGKIAEGDNEER.

Belongs to the RxLR effector family.

Its subcellular location is the secreted. The protein resides in the host cell. In terms of biological role, effector that is involved in host plant infection. Contributes to virulence during the early infection stage, by inhibiting plant defense responses induced by both PAMP-triggered immunity (PTI) and effector-triggered immunity (ETI). In Phytophthora infestans (strain T30-4) (Potato late blight agent), this protein is RxLR effector protein CRE8.